A 232-amino-acid chain; its full sequence is Small ribosomal subunit protein uS3 (232 aa).

The 69-residue stretch at 39-107 (IREILHKELK…DVVINIVEIR (69 aa)) folds into the KH type-2 domain.

Belongs to the universal ribosomal protein uS3 family. Part of the 30S ribosomal subunit. Forms a tight complex with proteins S10 and S14.

Binds the lower part of the 30S subunit head. Binds mRNA in the 70S ribosome, positioning it for translation. This Rhodopseudomonas palustris (strain HaA2) protein is Small ribosomal subunit protein uS3.